We begin with the raw amino-acid sequence, 349 residues long: tRNA N6-adenosine threonylcarbamoyltransferase (349 aa).

Residues His111 and His115 each coordinate Fe cation. Residues 134–138 (LVSGG), Asp167, Gly180, Asp184, and Asn279 each bind substrate. Fe cation is bound at residue Asp307.

This sequence belongs to the KAE1 / TsaD family. Fe(2+) is required as a cofactor.

It localises to the cytoplasm. It carries out the reaction L-threonylcarbamoyladenylate + adenosine(37) in tRNA = N(6)-L-threonylcarbamoyladenosine(37) in tRNA + AMP + H(+). Required for the formation of a threonylcarbamoyl group on adenosine at position 37 (t(6)A37) in tRNAs that read codons beginning with adenine. Is involved in the transfer of the threonylcarbamoyl moiety of threonylcarbamoyl-AMP (TC-AMP) to the N6 group of A37, together with TsaE and TsaB. TsaD likely plays a direct catalytic role in this reaction. This Nostoc punctiforme (strain ATCC 29133 / PCC 73102) protein is tRNA N6-adenosine threonylcarbamoyltransferase.